The primary structure comprises 433 residues: 23S rRNA (uracil(1939)-C(5))-methyltransferase RlmD (433 aa).

In terms of domain architecture, TRAM spans 1 to 53; the sequence is MPTAVIESLDHEGRGIARVEGKAVFIEGGLPGETVEYRVLRSKPNYEQAEATR. 4 residues coordinate [4Fe-4S] cluster: C66, C72, C75, and C154. Residues Q263, F292, N297, E313, N341, and D362 each contribute to the S-adenosyl-L-methionine site. C389 serves as the catalytic Nucleophile.

It belongs to the class I-like SAM-binding methyltransferase superfamily. RNA M5U methyltransferase family. RlmD subfamily.

The catalysed reaction is uridine(1939) in 23S rRNA + S-adenosyl-L-methionine = 5-methyluridine(1939) in 23S rRNA + S-adenosyl-L-homocysteine + H(+). Its function is as follows. Catalyzes the formation of 5-methyl-uridine at position 1939 (m5U1939) in 23S rRNA. In Azoarcus sp. (strain BH72), this protein is 23S rRNA (uracil(1939)-C(5))-methyltransferase RlmD.